The chain runs to 688 residues: Subtilisin-like protease 1 (688 aa).

The signal sequence occupies residues 1–25 (MMLNKKVVALCTLTLHLFCIFLCLG). Residues 26–217 (KEVRSEENGK…IESDKLVSAD (192 aa)) constitute a propeptide, inhibition peptide. Positions 99–129 (EKNKNDNHNNNNNNISSSSSSSSNTFGEEKE) are disordered. The span at 106–122 (HNNNNNNISSSSSSSSN) shows a compositional bias: low complexity. Asn-112 carries N-linked (GlcNAc...) asparagine glycosylation. Ca(2+)-binding residues include Asn-145, Thr-148, and Pro-150. Asn-171 is a glycosylation site (N-linked (GlcNAc...) asparagine). Position 205 (Gly-205) interacts with Ca(2+). N-linked (GlcNAc...) asparagine glycosylation is present at Asn-261. Disordered stretches follow at residues 264–284 (HAAT…DTFS) and 303–332 (NNNN…RPGK). Low complexity predominate over residues 303–328 (NNNNYYYSHSSNGHNSSSRNSSSSRS). Asn-317 and Asn-322 each carry an N-linked (GlcNAc...) asparagine glycan. A Ca(2+)-binding site is contributed by Asp-337. The Peptidase S8 domain maps to 343–661 (QWGLDLSRLD…AGYADINKAV (319 aa)). 2 cysteine pairs are disulfide-bonded: Cys-369–Cys-479 and Cys-458–Cys-475. Residue Asp-372 is the Charge relay system of the active site. Residues Asp-381, Glu-392, Arg-396, Phe-399, Asp-400, Asp-401, Asp-402, Asn-404, Ile-406, Asp-408, and Asp-409 each contribute to the Ca(2+) site. A glycan (N-linked (GlcNAc...) asparagine) is linked at Asn-417. The Charge relay system role is filled by His-428. Ca(2+) contacts are provided by Ile-439, Asn-442, Ile-444, and Val-446. N-linked (GlcNAc...) asparagine glycans are attached at residues Asn-488, Asn-501, and Asn-520. Cysteines 521 and 534 form a disulfide. Asn-603 is a glycosylation site (N-linked (GlcNAc...) asparagine). Catalysis depends on Ser-606, which acts as the Charge relay system. Asn-675 carries N-linked (GlcNAc...) asparagine glycosylation.

Belongs to the peptidase S8 family. As to quaternary structure, heterodimer between p54 form and prodomain p31; the interaction inhibits p54 catalytic activity. Heterodimer p31-p54 is monomeric at basic pH and dimeric at acidic pH; dimerization is driven by the N-terminal prodomain (p31). The cofactor is Ca(2+). The prodomain (p31) is cleaved, probably by autocatalysis, during the transport to or in the Golgi apparatus, and remains non-covalently associated with the p54 form as an inhibitor. p54 is further cleaved into the p47 form. The p54-to-p47 conversion can be also autocatalytic. This cleavage is likely occurring in the exoneme prior to egress and is mediated by PMX/plasmepsin X. Heterodimer p31-p54 is activated by cleavage of prodomain (p31) by the aspartic protease PMX; cleavage by PMX abolishes inhibitory capacity of p31. Primary autocatalytic processing of SUB1 is essential for parasite growth; the p54-to-p47 conversion is dispensable for SUB1 functions in the parasites. In terms of processing, the disulfide bond between Cys-521 and Cys-534 acts as a redox-sensitive disulfide switch. The oxidized form is required for catalytic activity. Post-translationally, the relevance of the N-glycosylation is not clear. In an insect expression system, SUB1 glycosylation appears to affect its processing into the active mature form suggesting that SUB1 may not be N-glycosylated in parasites.

It is found in the secreted. Its subcellular location is the parasitophorous vacuole lumen. The catalysed reaction is Hydrolysis of proteins with broad specificity for peptide bonds, and a preference for a large uncharged residue in P1. Hydrolyzes peptide amides.. Its activity is regulated as follows. p54 and probably p47 forms are inhibited by the non-covalent interaction with the cleaved propeptide. Inhibited by subtilisin propeptide-like protein SUB1-ProM. Inhibited by small molecule MRT12113. In terms of biological role, serine protease which plays an essential role in merozoite invasion of and egress from host erythrocytes by processing and activating various merozoite surface and parasitophorous vacuole proteins. Mediates the proteolytic maturation of serine proteases SERA4, SERA5 and SERA6 just prior to merozoite egress. Prior to merozoite egress, cleaves merozoite surface proteins MSP1, MSP6 and MSP7, which form the MSP1/6/7 complex, and thereby may prime the parasite cell surface for invasion of fresh erythrocytes. Prior to merozoite egress, cleaves MSRP2 converting it to MSRP2 p25 form, and RAP1 converting it to RAP1 p67 form. The protein is Subtilisin-like protease 1 of Plasmodium falciparum (isolate 3D7).